Reading from the N-terminus, the 324-residue chain is Beta-ketoacyl-[acyl-carrier-protein] synthase III (324 aa).

Active-site residues include C112 and H249. The segment at 250–254 (QANRR) is ACP-binding. Residue N279 is part of the active site.

The protein belongs to the thiolase-like superfamily. FabH family. Homodimer.

It localises to the cytoplasm. The catalysed reaction is malonyl-[ACP] + acetyl-CoA + H(+) = 3-oxobutanoyl-[ACP] + CO2 + CoA. It participates in lipid metabolism; fatty acid biosynthesis. Its function is as follows. Catalyzes the condensation reaction of fatty acid synthesis by the addition to an acyl acceptor of two carbons from malonyl-ACP. Catalyzes the first condensation reaction which initiates fatty acid synthesis and may therefore play a role in governing the total rate of fatty acid production. Possesses both acetoacetyl-ACP synthase and acetyl transacylase activities. Its substrate specificity determines the biosynthesis of branched-chain and/or straight-chain of fatty acids. This Streptococcus pyogenes serotype M4 (strain MGAS10750) protein is Beta-ketoacyl-[acyl-carrier-protein] synthase III.